The sequence spans 201 residues: FMN-dependent NADH:quinone oxidoreductase (201 aa).

FMN-binding positions include serine 10, 16-18 (SQS), 96-99 (MYNF), and 140-143 (SRGG).

Belongs to the azoreductase type 1 family. Homodimer. FMN serves as cofactor.

The enzyme catalyses 2 a quinone + NADH + H(+) = 2 a 1,4-benzosemiquinone + NAD(+). It carries out the reaction N,N-dimethyl-1,4-phenylenediamine + anthranilate + 2 NAD(+) = 2-(4-dimethylaminophenyl)diazenylbenzoate + 2 NADH + 2 H(+). Quinone reductase that provides resistance to thiol-specific stress caused by electrophilic quinones. In terms of biological role, also exhibits azoreductase activity. Catalyzes the reductive cleavage of the azo bond in aromatic azo compounds to the corresponding amines. The polypeptide is FMN-dependent NADH:quinone oxidoreductase (Escherichia coli O157:H7).